We begin with the raw amino-acid sequence, 447 residues long: Methyl-coenzyme M reductase I subunit beta (447 aa).

Tyr371 is a coenzyme M binding site. Gly373 provides a ligand contact to coenzyme B.

This sequence belongs to the methyl-coenzyme M reductase beta subunit family. MCR is a hexamer of two alpha, two beta, and two gamma chains, forming a dimer of heterotrimers. Coenzyme F430 serves as cofactor.

The protein localises to the cytoplasm. It catalyses the reaction coenzyme B + methyl-coenzyme M = methane + coenzyme M-coenzyme B heterodisulfide. It functions in the pathway one-carbon metabolism; methyl-coenzyme M reduction; methane from methyl-coenzyme M: step 1/1. Its function is as follows. Component of the methyl-coenzyme M reductase (MCR) I that catalyzes the reductive cleavage of methyl-coenzyme M (CoM-S-CH3 or 2-(methylthio)ethanesulfonate) using coenzyme B (CoB or 7-mercaptoheptanoylthreonine phosphate) as reductant which results in the production of methane and the mixed heterodisulfide of CoB and CoM (CoM-S-S-CoB). This is the final step in methanogenesis. In Methanocaldococcus jannaschii (strain ATCC 43067 / DSM 2661 / JAL-1 / JCM 10045 / NBRC 100440) (Methanococcus jannaschii), this protein is Methyl-coenzyme M reductase I subunit beta (mcrB).